The chain runs to 1054 residues: Leucine-rich repeats and immunoglobulin-like domains protein 2 (1054 aa).

The first 39 residues, 1-39 (MAAAPRGIWEQRRLGCGLGPLARLLILAQALRLLPAARA), serve as a signal peptide directing secretion. Residues 40–74 (GLCPAPCACRLPLLDCSRRKLPAPSWRALSGPLPS) form the LRRNT domain. 15 LRR repeats span residues 75–96 (DISS…LESQ), 97–118 (TLQE…GEPT), 120–141 (NITL…AFEL), 144–165 (ALES…SFPR), 167–188 (SLKY…CFDN), 192–213 (SLLV…VFKL), 215–236 (HLQF…TFQG), 239–260 (SLRS…AFFG), 263–284 (NMEE…WLYG), 287–308 (MLQQ…AWEF), 311–332 (RLSE…AFVG), 335–356 (LLER…VFRF), 359–381 (NLQT…SEAF), 386–407 (SLTK…AFIG), and 410–431 (SLEY…AFSQ). N-linked (GlcNAc...) asparagine glycosylation occurs at Asn-90. Asn-120 carries N-linked (GlcNAc...) asparagine glycosylation. 2 N-linked (GlcNAc...) asparagine glycosylation sites follow: Asn-172 and Asn-188. N-linked (GlcNAc...) asparagine glycosylation is present at Asn-273. Asn-440, Asn-467, Asn-513, Asn-570, and Asn-588 each carry an N-linked (GlcNAc...) asparagine glycan. The LRRCT domain maps to 442–493 (SSLLCDCHLKWLLQWLVDNNFHHSVNVSCAHPEWLAGQSILNVDLKDFVCDD). 3 consecutive Ig-like C2-type domains span residues 497–596 (PQIR…AKLT), 601–690 (PSFL…ASLT), and 695–784 (PSFI…NVIS). An intrachain disulfide couples Cys-518 to Cys-579. Cys-622 and Cys-674 are oxidised to a cystine. Residues Asn-686 and Asn-727 are each glycosylated (N-linked (GlcNAc...) asparagine). Cys-716 and Cys-765 are oxidised to a cystine. Residues 807–827 (IVIIVVVCCVVGTSLIWVIVI) traverse the membrane as a helical segment. Tyr-905 is subject to Phosphotyrosine. An N-linked (GlcNAc...) asparagine glycan is attached at Asn-1024.

It localises to the cell membrane. The protein localises to the cytoplasm. In Mus musculus (Mouse), this protein is Leucine-rich repeats and immunoglobulin-like domains protein 2 (Lrig2).